Consider the following 570-residue polypeptide: Dihydroxy-acid dehydratase (570 aa).

C61 provides a ligand contact to [2Fe-2S] cluster. D94 serves as a coordination point for Mg(2+). C135 contributes to the [2Fe-2S] cluster binding site. Positions 136 and 137 each coordinate Mg(2+). An N6-carboxylysine modification is found at K137. C207 is a [2Fe-2S] cluster binding site. E459 is a binding site for Mg(2+). Catalysis depends on S485, which acts as the Proton acceptor.

It belongs to the IlvD/Edd family. In terms of assembly, homodimer. [2Fe-2S] cluster serves as cofactor. Mg(2+) is required as a cofactor.

The enzyme catalyses (2R)-2,3-dihydroxy-3-methylbutanoate = 3-methyl-2-oxobutanoate + H2O. It carries out the reaction (2R,3R)-2,3-dihydroxy-3-methylpentanoate = (S)-3-methyl-2-oxopentanoate + H2O. Its pathway is amino-acid biosynthesis; L-isoleucine biosynthesis; L-isoleucine from 2-oxobutanoate: step 3/4. It functions in the pathway amino-acid biosynthesis; L-valine biosynthesis; L-valine from pyruvate: step 3/4. Functions in the biosynthesis of branched-chain amino acids. Catalyzes the dehydration of (2R,3R)-2,3-dihydroxy-3-methylpentanoate (2,3-dihydroxy-3-methylvalerate) into 2-oxo-3-methylpentanoate (2-oxo-3-methylvalerate) and of (2R)-2,3-dihydroxy-3-methylbutanoate (2,3-dihydroxyisovalerate) into 2-oxo-3-methylbutanoate (2-oxoisovalerate), the penultimate precursor to L-isoleucine and L-valine, respectively. The chain is Dihydroxy-acid dehydratase from Lactococcus lactis subsp. cremoris (strain MG1363).